The chain runs to 210 residues: Protein HEADING DATE REPRESSOR 1 (210 aa).

The tract at residues 1-97 is disordered; the sequence is MEEPASADPP…GKRSSAEMLL (97 aa). Residues 29 to 49 are a coiled coil; sequence QQELNKEAADEQLNNQAHEEA. Composition is skewed to basic and acidic residues over residues 45-54 and 62-79; these read AHEEAMKIDD and DDVH…RKAL. A coiled-coil region spans residues 129–184; it reads RRIAIQEMNRKDREINGLNEQLEEDSRVLELLQKQLADERKKRTEIEKENSMLHEQ.

In terms of assembly, interacts with OSK3 and OSK4. In terms of tissue distribution, mostly expressed in leaves, seedlings and floral organs, and, to a lower extent, in panicle, roots, nodes, internodes, leaf joint and sheath.

It is found in the nucleus. Functionally, regulates flowering time via a photoperiod-dependent pathway. Suppressor of flowering that upregulates HD1 and down-regulates EHD1 in long days (LD), thus leading to the down-regulation of HD3A and RFT1. Triggers OSK4-mediated HD1 phosphorylation. This Oryza sativa subsp. japonica (Rice) protein is Protein HEADING DATE REPRESSOR 1.